A 488-amino-acid polypeptide reads, in one-letter code: Probable aldehyde dehydrogenase (488 aa).

240–245 lines the NAD(+) pocket; sequence GSSVTG. Residues E262 and C296 contribute to the active site.

It belongs to the aldehyde dehydrogenase family.

The enzyme catalyses an aldehyde + NAD(+) + H2O = a carboxylate + NADH + 2 H(+). Its function is as follows. Involved in an alpha-terpineol oxidation system. In Pseudomonas sp, this protein is Probable aldehyde dehydrogenase (terPE).